The primary structure comprises 426 residues: Eukaryotic translation initiation factor 3 subunit M (426 aa).

The region spanning 179 to 350 is the PCI domain; sequence DDEDSYRYLI…KVFLVHRTTY (172 aa). Over residues 385–401 the composition is skewed to basic and acidic residues; the sequence is DVEGQREREQQELERKL. The interval 385–426 is disordered; the sequence is DVEGQREREQQELERKLAGAGMGGGPGGDRRRQQKPRTDEDD.

The protein belongs to the eIF-3 subunit M family. Component of the eukaryotic translation initiation factor 3 (eIF-3) complex.

It localises to the cytoplasm. In terms of biological role, component of the eukaryotic translation initiation factor 3 (eIF-3) complex, which is involved in protein synthesis of a specialized repertoire of mRNAs and, together with other initiation factors, stimulates binding of mRNA and methionyl-tRNAi to the 40S ribosome. The eIF-3 complex specifically targets and initiates translation of a subset of mRNAs involved in cell proliferation. This Chaetomium globosum (strain ATCC 6205 / CBS 148.51 / DSM 1962 / NBRC 6347 / NRRL 1970) (Soil fungus) protein is Eukaryotic translation initiation factor 3 subunit M.